The sequence spans 105 residues: UPF0060 membrane protein Reut_B3679 (105 aa).

The next 4 membrane-spanning stretches (helical) occupy residues 4-24 (IALY…PYLW), 28-48 (GASA…AWLL), 60-80 (AAYG…VDGV), and 82-102 (PSAW…IIVF).

It belongs to the UPF0060 family.

It is found in the cell inner membrane. This chain is UPF0060 membrane protein Reut_B3679, found in Cupriavidus pinatubonensis (strain JMP 134 / LMG 1197) (Cupriavidus necator (strain JMP 134)).